The chain runs to 452 residues: Trigger factor (452 aa).

A PPIase FKBP-type domain is found at 171–256 (GDRVTISFKG…ATKVEAPQDT (86 aa)).

It belongs to the FKBP-type PPIase family. Tig subfamily.

It is found in the cytoplasm. The enzyme catalyses [protein]-peptidylproline (omega=180) = [protein]-peptidylproline (omega=0). Functionally, involved in protein export. Acts as a chaperone by maintaining the newly synthesized protein in an open conformation. Functions as a peptidyl-prolyl cis-trans isomerase. This Rhodopseudomonas palustris (strain HaA2) protein is Trigger factor.